The sequence spans 204 residues: Thymidylate kinase (204 aa).

11–18 (GLDKSGKT) is an ATP binding site.

It belongs to the thymidylate kinase family.

It carries out the reaction dTMP + ATP = dTDP + ADP. It participates in pyrimidine metabolism; dTTP biosynthesis. The polypeptide is Thymidylate kinase (TMK) (Rabbitpox virus (strain Utrecht) (RPV)).